Reading from the N-terminus, the 247-residue chain is Ubiquinone biosynthesis O-methyltransferase (247 aa).

Residues R41, G72, D93, and M136 each contribute to the S-adenosyl-L-methionine site.

This sequence belongs to the methyltransferase superfamily. UbiG/COQ3 family.

The enzyme catalyses a 3-demethylubiquinol + S-adenosyl-L-methionine = a ubiquinol + S-adenosyl-L-homocysteine + H(+). It catalyses the reaction a 3-(all-trans-polyprenyl)benzene-1,2-diol + S-adenosyl-L-methionine = a 2-methoxy-6-(all-trans-polyprenyl)phenol + S-adenosyl-L-homocysteine + H(+). Its pathway is cofactor biosynthesis; ubiquinone biosynthesis. Its function is as follows. O-methyltransferase that catalyzes the 2 O-methylation steps in the ubiquinone biosynthetic pathway. The polypeptide is Ubiquinone biosynthesis O-methyltransferase (Bartonella quintana (strain Toulouse) (Rochalimaea quintana)).